Reading from the N-terminus, the 401-residue chain is tRNA(Met) cytidine acetate ligase (401 aa).

Residues 7-20 (IVEYNPFHNGHLYH), G102, N164, and R189 each bind ATP.

This sequence belongs to the TmcAL family.

It localises to the cytoplasm. The enzyme catalyses cytidine(34) in elongator tRNA(Met) + acetate + ATP = N(4)-acetylcytidine(34) in elongator tRNA(Met) + AMP + diphosphate. Its function is as follows. Catalyzes the formation of N(4)-acetylcytidine (ac(4)C) at the wobble position of elongator tRNA(Met), using acetate and ATP as substrates. First activates an acetate ion to form acetyladenylate (Ac-AMP) and then transfers the acetyl group to tRNA to form ac(4)C34. The chain is tRNA(Met) cytidine acetate ligase from Thermoanaerobacter pseudethanolicus (strain ATCC 33223 / 39E) (Clostridium thermohydrosulfuricum).